A 165-amino-acid chain; its full sequence is Putative 4-hydroxy-4-methyl-2-oxoglutarate aldolase (165 aa).

Substrate contacts are provided by residues 80–83 (GGNL) and Arg102. Asp103 is an a divalent metal cation binding site.

The protein belongs to the class II aldolase/RraA-like family. As to quaternary structure, homotrimer. A divalent metal cation serves as cofactor.

The enzyme catalyses 4-hydroxy-4-methyl-2-oxoglutarate = 2 pyruvate. It carries out the reaction oxaloacetate + H(+) = pyruvate + CO2. Catalyzes the aldol cleavage of 4-hydroxy-4-methyl-2-oxoglutarate (HMG) into 2 molecules of pyruvate. Also contains a secondary oxaloacetate (OAA) decarboxylase activity due to the common pyruvate enolate transition state formed following C-C bond cleavage in the retro-aldol and decarboxylation reactions. The polypeptide is Putative 4-hydroxy-4-methyl-2-oxoglutarate aldolase (Burkholderia mallei (strain NCTC 10247)).